A 570-amino-acid chain; its full sequence is Sulfite reductase [NADPH] hemoprotein beta-component (570 aa).

Positions 434, 440, 479, and 483 each coordinate [4Fe-4S] cluster. Cys-483 lines the siroheme pocket.

It belongs to the nitrite and sulfite reductase 4Fe-4S domain family. As to quaternary structure, alpha(8)-beta(8). The alpha component is a flavoprotein, the beta component is a hemoprotein. It depends on siroheme as a cofactor. [4Fe-4S] cluster serves as cofactor.

The enzyme catalyses hydrogen sulfide + 3 NADP(+) + 3 H2O = sulfite + 3 NADPH + 4 H(+). It functions in the pathway sulfur metabolism; hydrogen sulfide biosynthesis; hydrogen sulfide from sulfite (NADPH route): step 1/1. In terms of biological role, component of the sulfite reductase complex that catalyzes the 6-electron reduction of sulfite to sulfide. This is one of several activities required for the biosynthesis of L-cysteine from sulfate. The polypeptide is Sulfite reductase [NADPH] hemoprotein beta-component (Shigella dysenteriae serotype 1 (strain Sd197)).